A 379-amino-acid chain; its full sequence is Sterol 24-C-methyltransferase erg-4 (379 aa).

The protein belongs to the class I-like SAM-binding methyltransferase superfamily. Erg6/SMT family.

It carries out the reaction lanosterol + S-adenosyl-L-methionine = eburicol + S-adenosyl-L-homocysteine + H(+). It participates in steroid metabolism; ergosterol biosynthesis. Its function is as follows. Catalyzes the methyl transfer from S-adenosyl-methionine to the C-24 of lanosterol to form eburicol. This Neurospora crassa (strain ATCC 24698 / 74-OR23-1A / CBS 708.71 / DSM 1257 / FGSC 987) protein is Sterol 24-C-methyltransferase erg-4.